Consider the following 440-residue polypeptide: Protein root UVB sensitive 3 (440 aa).

The next 3 helical transmembrane spans lie at 109–129 (IGAT…GILF), 154–174 (IGML…VVVC), and 232–252 (FTSG…VFHM).

It belongs to the RUS1 family.

The protein localises to the membrane. The polypeptide is Protein root UVB sensitive 3 (Arabidopsis thaliana (Mouse-ear cress)).